The sequence spans 590 residues: FAD-linked oxidoreductase malF (590 aa).

Residues 1 to 18 (MKYTATFALLILAIGIQT) form the signal peptide. N-linked (GlcNAc...) asparagine glycosylation is found at Asn44, Asn80, Asn103, Asn178, and Asn396. In terms of domain architecture, FAD-binding PCMH-type spans 117–303 (AQGRIPLYSA…TSVTLRAFAD (187 aa)).

It belongs to the oxygen-dependent FAD-linked oxidoreductase family. It depends on FAD as a cofactor.

Functionally, FAD-linked oxidoreductase; part of the gene cluster that mediates the biosynthesis of malbrancheamide, a dichlorinated fungal indole alkaloid that belongs to a family of natural products containing a characteristic bicyclo[2.2.2]diazaoctane core. The first step of malbrancheamide biosynthesis involves coupling of L-proline and L-tryptophan by malG, a bimodular NRPS, to produce L-Pro-L-Trp aldehyde through reductive offloading. This compound undergoes spontaneous cyclization and dehydration to give a dienamine which is reverse prenylated at C-2 by malE. The other prenyltransferase present in the cluster, malB, displays modest activity, suggesting that may be a redundant gene in the pathway. Subsequently, a [4+2] Diels-Alder cyclo-addition catalyzed by the bifunctional enzyme malC forms the characteristic bicyclo[2.2.2]diazaoctane ring of premalbrancheamid. Finally, the flavin-dependent halogenase malA catalyzes the iterative dichlorination of the indole ring of premalbrancheamide to yield C-9 monochlorinated malbrancheamide B, C-8 monochlorinated isomalbrancheamide B, and dichlorinated malbrancheamide. MalA is also able to brominate premalbrancheamide at C-9 to yield malbrancheamide C, and, to a lesser extend, at C-8 to yield isomalbrancheamide C. Finally, malA can brominate C-9 monochlorinated malbrancheamide B at C-8 to yield malbrancheamide D, or C-8 monochlorinated isomalbrancheamide B at C-9 to produce isomalbrancheamide D. In Malbranchea aurantiaca, this protein is FAD-linked oxidoreductase malF.